The following is a 328-amino-acid chain: DNA-directed RNA polymerase subunit alpha (328 aa).

The alpha N-terminal domain (alpha-NTD) stretch occupies residues 1–231; the sequence is MIQQMQMPEK…DHVRLFSLFS (231 aa). The segment at 252–328 is alpha C-terminal domain (alpha-CTD); it reads MRKLLMTRIE…MEVTKYRLNQ (77 aa).

This sequence belongs to the RNA polymerase alpha chain family. Homodimer. The RNAP catalytic core consists of 2 alpha, 1 beta, 1 beta' and 1 omega subunit. When a sigma factor is associated with the core the holoenzyme is formed, which can initiate transcription.

The enzyme catalyses RNA(n) + a ribonucleoside 5'-triphosphate = RNA(n+1) + diphosphate. DNA-dependent RNA polymerase catalyzes the transcription of DNA into RNA using the four ribonucleoside triphosphates as substrates. The protein is DNA-directed RNA polymerase subunit alpha of Chloroherpeton thalassium (strain ATCC 35110 / GB-78).